The primary structure comprises 251 residues: NADPH-dependent oxidoreductase (251 aa).

This sequence belongs to the flavin oxidoreductase frp family. FMN serves as cofactor.

Reduces FMN, organic nitro compounds and disulfide DTNB. Involved in maintenance of the cellular redox state and the disulfide stress response. This chain is NADPH-dependent oxidoreductase (nfrA), found in Staphylococcus haemolyticus (strain JCSC1435).